Consider the following 290-residue polypeptide: Small ribosomal subunit biogenesis GTPase RsgA (290 aa).

The 158-residue stretch at 62-219 (RTCLKRPAVA…VADTPGFSRL (158 aa)) folds into the CP-type G domain. GTP is bound by residues 111 to 114 (NKAD) and 161 to 169 (GPSGVGKSS). Zn(2+)-binding residues include C243, C248, H250, and C256.

It belongs to the TRAFAC class YlqF/YawG GTPase family. RsgA subfamily. In terms of assembly, monomer. Associates with 30S ribosomal subunit, binds 16S rRNA. Zn(2+) serves as cofactor.

It is found in the cytoplasm. Functionally, one of several proteins that assist in the late maturation steps of the functional core of the 30S ribosomal subunit. Helps release RbfA from mature subunits. May play a role in the assembly of ribosomal proteins into the subunit. Circularly permuted GTPase that catalyzes slow GTP hydrolysis, GTPase activity is stimulated by the 30S ribosomal subunit. In Moorella thermoacetica (strain ATCC 39073 / JCM 9320), this protein is Small ribosomal subunit biogenesis GTPase RsgA.